The sequence spans 373 residues: Probable pectin lyase C (373 aa).

An N-terminal signal peptide occupies residues 1–17 (MKKYLLSLLAAVTYTTA). Cystine bridges form between Cys78–Cys95 and Cys87–Cys215. Residues Asn140 and Asn229 are each glycosylated (N-linked (GlcNAc...) asparagine). Arg245 is a catalytic residue. Cys315 and Cys323 form a disulfide bridge.

It belongs to the polysaccharide lyase 1 family.

The protein resides in the secreted. It carries out the reaction Eliminative cleavage of (1-&gt;4)-alpha-D-galacturonan methyl ester to give oligosaccharides with 4-deoxy-6-O-methyl-alpha-D-galact-4-enuronosyl groups at their non-reducing ends.. Its function is as follows. Pectinolytic enzymes consist of four classes of enzymes: pectin lyase, polygalacturonase, pectin methylesterase and rhamnogalacturonase. Among pectinolytic enzymes, pectin lyase is the most important in depolymerization of pectin, since it cleaves internal glycosidic bonds of highly methylated pectins. This is Probable pectin lyase C (pelC) from Emericella nidulans (strain FGSC A4 / ATCC 38163 / CBS 112.46 / NRRL 194 / M139) (Aspergillus nidulans).